The chain runs to 236 residues: NEP1-interacting protein 1 (236 aa).

The Lumenal, thylakoid portion of the chain corresponds to Met-1–Ala-44. A helical transmembrane segment spans residues Val-45–Ile-65. At Gly-66–Ala-78 the chain is on the stromal side. Residues Val-79–Trp-99 traverse the membrane as a helical segment. Over Lys-100–Ser-104 the chain is Lumenal, thylakoid. A helical membrane pass occupies residues Arg-105 to Val-125. The Stromal segment spans residues Arg-126–Leu-236. The RING-type; atypical zinc finger occupies Cys-191–Arg-233.

This sequence belongs to the RING-type zinc finger family. NIP subfamily. In terms of assembly, interacts with RPOT2.

The protein resides in the plastid. It is found in the chloroplast thylakoid membrane. Functionally, intrinsic thylakoid membrane protein that fixes RPOT2 on the stromal side of the thylakoid membrane. This Arabidopsis thaliana (Mouse-ear cress) protein is NEP1-interacting protein 1 (NIP1).